Here is a 219-residue protein sequence, read N- to C-terminus: Uridylate kinase (219 aa).

Position 9-10 (9-10 (GS)) interacts with ATP. A UMP-binding site is contributed by G41. Positions 42 and 46 each coordinate ATP. UMP contacts are provided by residues D63 and 110–116 (TFPGHTT). The ATP site is built by T136, N137, Y142, and D145.

It belongs to the UMP kinase family. In terms of assembly, homohexamer.

It localises to the cytoplasm. It carries out the reaction UMP + ATP = UDP + ADP. It functions in the pathway pyrimidine metabolism; CTP biosynthesis via de novo pathway; UDP from UMP (UMPK route): step 1/1. With respect to regulation, inhibited by UTP. In terms of biological role, catalyzes the reversible phosphorylation of UMP to UDP. In Archaeoglobus fulgidus (strain ATCC 49558 / DSM 4304 / JCM 9628 / NBRC 100126 / VC-16), this protein is Uridylate kinase.